A 376-amino-acid polypeptide reads, in one-letter code: Putative 12-oxophytodienoate reductase 13 (376 aa).

FMN contacts are provided by residues 25-27 (PLT), Ala58, and Gln99. 165 to 168 (HGAH) lines the substrate pocket. Residues Arg217, Gly301, and 322–323 (GR) contribute to the FMN site.

This sequence belongs to the NADH:flavin oxidoreductase/NADH oxidase family. It depends on FMN as a cofactor.

Functionally, putative oxophytodienoate reductase that may be involved in the biosynthesis or metabolism of oxylipin signaling molecules. This Oryza sativa subsp. japonica (Rice) protein is Putative 12-oxophytodienoate reductase 13 (OPR13).